Consider the following 458-residue polypeptide: Elongation factor 1-alpha (458 aa).

Position 2 is a n,N,N-trimethylglycine (G2). K3 is modified (N6,N6-dimethyllysine; alternate). K3 carries the N6-methyllysine; alternate modification. Positions 5–240 (KTHVNVVVIG…DAIEPPVRPT (236 aa)) constitute a tr-type G domain. Residues 14-21 (GHVDSGKS) are G1. A GTP-binding site is contributed by 14-21 (GHVDSGKS). N6-methyllysine is present on K30. The tract at residues 70 to 74 (GITID) is G2. The residue at position 79 (K79) is an N6,N6,N6-trimethyllysine. The tract at residues 91–94 (DAPG) is G3. GTP-binding positions include 91–95 (DAPGH) and 153–156 (NKMD). Residues 153-156 (NKMD) form a G4 region. Residues 192 to 194 (SGW) form a G5 region. K316 is modified (N6,N6-dimethyllysine; alternate). K316 is modified (N6-methyllysine; alternate). The residue at position 390 (K390) is an N6-methyllysine.

It belongs to the TRAFAC class translation factor GTPase superfamily. Classic translation factor GTPase family. EF-Tu/EF-1A subfamily.

The protein resides in the cytoplasm. Functionally, this protein promotes the GTP-dependent binding of aminoacyl-tRNA to the A-site of ribosomes during protein biosynthesis. This chain is Elongation factor 1-alpha (TEF), found in Eremothecium gossypii (strain ATCC 10895 / CBS 109.51 / FGSC 9923 / NRRL Y-1056) (Yeast).